The chain runs to 429 residues: Cleavage stimulation factor subunit 50 (429 aa).

The segment at 20–41 is hydrophobic; sequence LNALIVAHLRHHNLSQVASAVA. WD repeat units follow at residues 121 to 160, 174 to 213, 218 to 257, 264 to 303, 308 to 347, 351 to 392, and 396 to 429; these read EHKS…QMIS, DHAE…AKRA, QDTH…CFLP, GVSG…CVRS, HGKS…MVKE, AKRV…KVAK, and NHNG…KESV.

Homodimer. Belongs to the CSTF complex. Forms a complex with cleavage and polyadenylation specificity factor (CPSF) subunits CSTF64, PABN3, CPSF30, FIPS5 and CPSF100.

It is found in the nucleus. Its function is as follows. One of the multiple factors required for polyadenylation and 3'-end cleavage of pre-mRNAs. May be responsible for the interaction of CSTF with other factors to form a stable complex on the pre-mRNA. In Arabidopsis thaliana (Mouse-ear cress), this protein is Cleavage stimulation factor subunit 50.